Here is a 674-residue protein sequence, read N- to C-terminus: Probable DNA helicase MCM9 (674 aa).

The C4-type zinc-finger motif lies at 165 to 198 (CRKCKCRFTVHPELEAGNRITLPASCKSKSAKGC). In terms of domain architecture, MCM spans 318 to 521 (GRNSILKGIC…KWDKIVSSHI (204 aa)). 368-375 (GDPGTGKS) lines the ATP pocket. The Arginine finger motif lies at 497-500 (SRFD).

The protein belongs to the MCM family.

Its subcellular location is the nucleus. The enzyme catalyses ATP + H2O = ADP + phosphate + H(+). Its function is as follows. Probable DNA helicase that may play a role in DNA repair during meiosis. In Oryza sativa subsp. japonica (Rice), this protein is Probable DNA helicase MCM9 (MCM9).